Here is a 124-residue protein sequence, read N- to C-terminus: uncharacterized protein (124 aa).

This is an uncharacterized protein from Saccharomyces cerevisiae (strain ATCC 204508 / S288c) (Baker's yeast).